Reading from the N-terminus, the 602-residue chain is Fructan 1-exohydrolase (602 aa).

An N-terminal signal peptide occupies residues 1 to 19 (MAQAWAFLLLPVLLLSSYA). The active site involves D81. Residues N174, N242, and N254 are each glycosylated (N-linked (GlcNAc...) asparagine). C452 and C498 are oxidised to a cystine.

The protein belongs to the glycosyl hydrolase 32 family. In terms of tissue distribution, detected in leaves, with maximum levels at the leaf tip.

It catalyses the reaction Hydrolysis of terminal, non-reducing (2-&gt;1)-linked beta-D-fructofuranose residues in fructans.. Its activity is regulated as follows. Inhibited by sucrose. Functionally, hydrolyzes inulin-type beta-(2,1)-fructans. Has low activity against beta-(2,6)-linked fructans. May play a role as a beta-(2,1)-trimmer during graminan biosynthesis. The sequence is that of Fructan 1-exohydrolase from Bromus pictus (Patagonian grass).